Reading from the N-terminus, the 360-residue chain is Phenylalanine--tRNA ligase alpha subunit (360 aa).

Glu-260 is a binding site for Mg(2+).

This sequence belongs to the class-II aminoacyl-tRNA synthetase family. Phe-tRNA synthetase alpha subunit type 1 subfamily. In terms of assembly, tetramer of two alpha and two beta subunits. Mg(2+) is required as a cofactor.

The protein localises to the cytoplasm. The enzyme catalyses tRNA(Phe) + L-phenylalanine + ATP = L-phenylalanyl-tRNA(Phe) + AMP + diphosphate + H(+). The polypeptide is Phenylalanine--tRNA ligase alpha subunit (Rhizobium rhizogenes (strain K84 / ATCC BAA-868) (Agrobacterium radiobacter)).